The sequence spans 67 residues: Large ribosomal subunit protein bL31c (67 aa).

The protein belongs to the bacterial ribosomal protein bL31 family. Type A subfamily. In terms of assembly, part of the 50S ribosomal subunit.

It is found in the plastid. The protein localises to the chloroplast. Functionally, binds the 23S rRNA. This Cyanidioschyzon merolae (strain NIES-3377 / 10D) (Unicellular red alga) protein is Large ribosomal subunit protein bL31c (rpl31).